We begin with the raw amino-acid sequence, 138 residues long: Bis(5'-nucleosyl)-tetraphosphatase [asymmetrical] (138 aa).

A Nudix hydrolase domain is found at 1 to 132; the sequence is MVVKAAGLVI…EMGSLLRKFS (132 aa). Residues 37–58 carry the Nudix box motif; that stretch reads GHVDPGEDEWQAAIRETKEEAN.

It belongs to the Nudix hydrolase family. Monomer. Mg(2+) serves as cofactor. Co(2+) is required as a cofactor. It depends on Mn(2+) as a cofactor. Requires Zn(2+) as cofactor. The cofactor is Ca(2+).

The catalysed reaction is P(1),P(4)-bis(5'-adenosyl) tetraphosphate + H2O = AMP + ATP + 2 H(+). Functionally, asymmetrically hydrolyzes Ap4A to yield AMP and ATP. The protein is Bis(5'-nucleosyl)-tetraphosphatase [asymmetrical] (ndx-4) of Caenorhabditis elegans.